Consider the following 142-residue polypeptide: Large ribosomal subunit protein uL13 (142 aa).

It belongs to the universal ribosomal protein uL13 family. Part of the 50S ribosomal subunit.

In terms of biological role, this protein is one of the early assembly proteins of the 50S ribosomal subunit, although it is not seen to bind rRNA by itself. It is important during the early stages of 50S assembly. This is Large ribosomal subunit protein uL13 from Shewanella baltica (strain OS185).